We begin with the raw amino-acid sequence, 509 residues long: MPRLVNGREAAPTYSNLVGFIFIFNLIVGTGALTLPGVFARAGWMLSLIVIVLLAIISYMTVTFIIEAMACANAIRNWQTLQALRQSRSSAENSENDDNADDVSLASGAEQVGDFERVPLTIQNREFHYYQLSHKFELGEMATLFFNEFGRVMFYLCLIVYLYGDLSIYSAAVARSLRDVVCDQTNGTDTNNLMYWPGDFENNTSLACWKEHTISRLNMYRVLLIGFTLIFGPFVYFNVQKTKYLQMLTAAFRWMAFTLMICISLKLLISRGAKGHPATFNVYGIPSLFGACVYSFMCHHSLPSLLAPIRHKSMVSKILSIDYIIICAFYILLAMTGIFAFERIEDLYTLDFLPYDVAYVDFWSGLLICIDYFLALFPIFTLSTSFPIVAITLKNNLQSLFLDMSQYESYSVILRLCFPLLAIIPPFCITYFTESLSSLVAFTGTYAGTGIQYIIPVFLVYFARRTCSELLGSGVVNRFKSPFKSSAWLVFVFIWSILCVCLVSINLFS.

Over 1–19 (MPRLVNGREAAPTYSNLVG) the chain is Cytoplasmic. A helical membrane pass occupies residues 20 to 40 (FIFIFNLIVGTGALTLPGVFA). At 41–45 (RAGWM) the chain is on the extracellular side. Residues 46–66 (LSLIVIVLLAIISYMTVTFII) traverse the membrane as a helical segment. The Cytoplasmic portion of the chain corresponds to 67 to 151 (EAMACANAIR…ATLFFNEFGR (85 aa)). A helical membrane pass occupies residues 152 to 172 (VMFYLCLIVYLYGDLSIYSAA). Over 173-218 (VARSLRDVVCDQTNGTDTNNLMYWPGDFENNTSLACWKEHTISRLN) the chain is Extracellular. N-linked (GlcNAc...) asparagine glycans are attached at residues N186, N202, and N203. A helical membrane pass occupies residues 219 to 239 (MYRVLLIGFTLIFGPFVYFNV). The Cytoplasmic portion of the chain corresponds to 240–248 (QKTKYLQML). A helical transmembrane segment spans residues 249-269 (TAAFRWMAFTLMICISLKLLI). At 270 to 277 (SRGAKGHP) the chain is on the extracellular side. Residues 278 to 298 (ATFNVYGIPSLFGACVYSFMC) form a helical membrane-spanning segment. Over 299–320 (HHSLPSLLAPIRHKSMVSKILS) the chain is Cytoplasmic. A helical transmembrane segment spans residues 321 to 341 (IDYIIICAFYILLAMTGIFAF). Residues 342–361 (ERIEDLYTLDFLPYDVAYVD) are Extracellular-facing. A helical membrane pass occupies residues 362-382 (FWSGLLICIDYFLALFPIFTL). At 383 to 411 (STSFPIVAITLKNNLQSLFLDMSQYESYS) the chain is on the cytoplasmic side. The helical transmembrane segment at 412–432 (VILRLCFPLLAIIPPFCITYF) threads the bilayer. The Extracellular portion of the chain corresponds to 433-439 (TESLSSL). The chain crosses the membrane as a helical span at residues 440-460 (VAFTGTYAGTGIQYIIPVFLV). Over 461–487 (YFARRTCSELLGSGVVNRFKSPFKSSA) the chain is Cytoplasmic. The helical transmembrane segment at 488 to 508 (WLVFVFIWSILCVCLVSINLF) threads the bilayer. Position 509 (S509) is a topological domain, extracellular.

It belongs to the TMEM104 family.

The protein resides in the membrane. The chain is Transmembrane protein 104 homolog from Drosophila melanogaster (Fruit fly).